Here is a 64-residue protein sequence, read N- to C-terminus: Prokaryotic ubiquitin-like protein Pup (64 aa).

The tract at residues 1-37 (MAQEQTQRAGGGEDDETTGGDGSAGQERREKLAAETD) is disordered. Residues 21-58 (DGSAGQERREKLAAETDDLLDEIDDVLEENAEDFVRAY) are ARC ATPase binding. A coiled-coil region spans residues 24 to 52 (AGQERREKLAAETDDLLDEIDDVLEENAE). The residue at position 64 (glutamine 64) is a Deamidated glutamine. Glutamine 64 participates in a covalent cross-link: Isoglutamyl lysine isopeptide (Gln-Lys) (interchain with K-? in acceptor proteins).

This sequence belongs to the prokaryotic ubiquitin-like protein family. In terms of assembly, strongly interacts with the proteasome-associated ATPase ARC through a hydrophobic interface; the interacting region of Pup lies in its C-terminal half. There is one Pup binding site per ARC hexamer ring. Post-translationally, is modified by deamidation of its C-terminal glutamine to glutamate by the deamidase Dop, a prerequisite to the subsequent pupylation process.

The protein operates within protein degradation; proteasomal Pup-dependent pathway. Protein modifier that is covalently attached to lysine residues of substrate proteins, thereby targeting them for proteasomal degradation. The tagging system is termed pupylation. In Rhodococcus erythropolis (strain PR4 / NBRC 100887), this protein is Prokaryotic ubiquitin-like protein Pup.